A 132-amino-acid polypeptide reads, in one-letter code: uncharacterized protein (132 aa).

The disordered stretch occupies residues 113–132 (LDPQSPLHSPPLSTSPDSRR).

This is an uncharacterized protein from Saccharomyces cerevisiae (strain ATCC 204508 / S288c) (Baker's yeast).